We begin with the raw amino-acid sequence, 312 residues long: Glyceraldehyde-3-phosphate dehydrogenase, cytosolic (312 aa).

Residues Arg5 to Ile6 and Asp27 each bind NAD(+). Residues Ser144–Thr146, Thr175, Thr204–Gly205, and Arg227 each bind D-glyceraldehyde 3-phosphate. Cys145 serves as the catalytic Nucleophile. An NAD(+)-binding site is contributed by Asn309.

This sequence belongs to the glyceraldehyde-3-phosphate dehydrogenase family. In terms of assembly, homotetramer.

The protein resides in the cytoplasm. It catalyses the reaction D-glyceraldehyde 3-phosphate + phosphate + NAD(+) = (2R)-3-phospho-glyceroyl phosphate + NADH + H(+). The protein operates within carbohydrate degradation; glycolysis; pyruvate from D-glyceraldehyde 3-phosphate: step 1/5. In terms of biological role, key enzyme in glycolysis that catalyzes the first step of the pathway by converting D-glyceraldehyde 3-phosphate (G3P) into 3-phospho-D-glyceroyl phosphate. Essential for the maintenance of cellular ATP levels and carbohydrate metabolism. The polypeptide is Glyceraldehyde-3-phosphate dehydrogenase, cytosolic (GapC) (Scenedesmus vacuolatus (Green alga)).